A 166-amino-acid chain; its full sequence is Transcription antitermination protein NusB (166 aa).

The segment covering 1–18 (MISDESDRFNPRDPKPAD) has biased composition (basic and acidic residues). Positions 1–28 (MISDESDRFNPRDPKPADAGKPSKSAKR) are disordered.

This sequence belongs to the NusB family.

Functionally, involved in transcription antitermination. Required for transcription of ribosomal RNA (rRNA) genes. Binds specifically to the boxA antiterminator sequence of the ribosomal RNA (rrn) operons. In Pseudomonas putida (strain GB-1), this protein is Transcription antitermination protein NusB.